Reading from the N-terminus, the 386-residue chain is 8-amino-7-oxononanoate synthase (386 aa).

R23 provides a ligand contact to substrate. A pyridoxal 5'-phosphate-binding site is contributed by 110–111; the sequence is GY. A substrate-binding site is contributed by H135. Residues S181, H209, and T236 each coordinate pyridoxal 5'-phosphate. K239 is subject to N6-(pyridoxal phosphate)lysine. T354 is a substrate binding site.

It belongs to the class-II pyridoxal-phosphate-dependent aminotransferase family. BioF subfamily. As to quaternary structure, homodimer. Pyridoxal 5'-phosphate is required as a cofactor.

It catalyses the reaction 6-carboxyhexanoyl-[ACP] + L-alanine + H(+) = (8S)-8-amino-7-oxononanoate + holo-[ACP] + CO2. It participates in cofactor biosynthesis; biotin biosynthesis. Functionally, catalyzes the decarboxylative condensation of pimeloyl-[acyl-carrier protein] and L-alanine to produce 8-amino-7-oxononanoate (AON), [acyl-carrier protein], and carbon dioxide. The protein is 8-amino-7-oxononanoate synthase of Thiobacillus denitrificans (strain ATCC 25259 / T1).